Here is an 85-residue protein sequence, read N- to C-terminus: Sec-independent protein translocase protein TatA (85 aa).

A helical transmembrane segment spans residues 1-21 (MGSMSIWHWLVVGVLVLLLFG). Residues 39-85 (FKKGMSEEDEPTQPAEPRPTPRLQQQPPIEPNADPKLQPMQDDRPQH) form a disordered region.

The protein belongs to the TatA/E family. As to quaternary structure, the Tat system comprises two distinct complexes: a TatABC complex, containing multiple copies of TatA, TatB and TatC subunits, and a separate TatA complex, containing only TatA subunits. Substrates initially bind to the TatABC complex, which probably triggers association of the separate TatA complex to form the active translocon.

It is found in the cell inner membrane. In terms of biological role, part of the twin-arginine translocation (Tat) system that transports large folded proteins containing a characteristic twin-arginine motif in their signal peptide across membranes. TatA could form the protein-conducting channel of the Tat system. This is Sec-independent protein translocase protein TatA from Rhizorhabdus wittichii (strain DSM 6014 / CCUG 31198 / JCM 15750 / NBRC 105917 / EY 4224 / RW1) (Sphingomonas wittichii).